We begin with the raw amino-acid sequence, 115 residues long: UPF0597 protein NTHI1023 (115 aa).

The protein belongs to the UPF0597 family.

This chain is UPF0597 protein NTHI1023, found in Haemophilus influenzae (strain 86-028NP).